The sequence spans 1331 residues: Sodium-dependent transporter bedraggled (1331 aa).

Positions 1–62 (MSSKEQQAAG…QLEHEQFGLS (62 aa)) are disordered. A compositionally biased stretch (polar residues) spans 16–25 (NSNAYSSLPP). Positions 28–43 (TGAGCSGAALGSGTGT) are enriched in gly residues. N-linked (GlcNAc...) asparagine glycosylation occurs at Asn-168. Disordered regions lie at residues 221 to 284 (EPRT…TEPV) and 363 to 473 (QTNA…SASS). Positions 258–282 (KTFSCSLRPTSQIASSSGSLETSTE) are enriched in polar residues. A compositionally biased stretch (basic and acidic residues) spans 369 to 383 (SSEEPRPRQYGRRLE). Polar residues predominate over residues 413–436 (LQDTPTHPIMSTCSELSSARSSRM). Low complexity predominate over residues 437–453 (PSPVSLPSDSSSSGSSS). Positions 463–473 (VQTTTMCSASS) are enriched in polar residues. 3 helical membrane-spanning segments follow: residues 505-525 (LALIGCTLGVFNMCRFAVLTI), 531-551 (FLLQFLLLSVIFGIPLLWLQM), and 567-587 (ISPICAGVGIALVMQQCFLAL). Asn-627 and Asn-631 each carry an N-linked (GlcNAc...) asparagine glycan. 4 consecutive transmembrane segments (helical) span residues 667–687 (QLAFYLALIWAAVFLILCKGL), 696–716 (IIYTLPLVALAVVTAKFVYVV), 741–761 (TAATQETFLTWGLLGASVIAI), and 778–798 (AILLVLFTLIGLGLMALLALC). Residue Asn-857 is glycosylated (N-linked (GlcNAc...) asparagine). A helical membrane pass occupies residues 890–910 (WVWAAVAFATFAGFGLAQLCV). Residue Asn-921 is glycosylated (N-linked (GlcNAc...) asparagine). 4 helical membrane-spanning segments follow: residues 926 to 946 (VLLSCVTGLLLSIPFATEMGI), 956 to 976 (LGGSWFIPIIWTAQIFGVFLI), 998 to 1018 (AFLALSWNVLLPIGLITLSVV), and 1044 to 1064 (MGSLIQIGVLLVIPVTAIIQI). 3 disordered regions span residues 1086–1136 (PEEG…SYTT), 1169–1238 (SLDA…ASTL), and 1256–1275 (VRHRQSQGGGNLVTASTLPR). Composition is skewed to polar residues over residues 1097-1115 (ARQTASQSRRNALGQTTEG) and 1186-1196 (ILTNPAGSSFN). Over residues 1197–1209 (ADPSPASSSSPES) the composition is skewed to low complexity.

Belongs to the sodium:neurotransmitter symporter (SNF) (TC 2.A.22) family.

It localises to the membrane. Functionally, putative sodium-dependent transporter which is required for viability, early imaginal disk development and adult motor coordination. Also has a role in the fate commitment of the R3/R4 photoreceptor cells. May function in ommatidial polarity by regulating the activity of the core polarity genes, acting upstream of (or in parallel to) Vang, dsh, pk, stan, and dgo, but downstream or independently of fz. This is Sodium-dependent transporter bedraggled from Drosophila melanogaster (Fruit fly).